A 197-amino-acid polypeptide reads, in one-letter code: Ribonuclease HII (197 aa).

Positions L7–V197 constitute an RNase H type-2 domain. D13, E14, and D109 together coordinate a divalent metal cation.

This sequence belongs to the RNase HII family. Mn(2+) serves as cofactor. Mg(2+) is required as a cofactor.

It localises to the cytoplasm. The catalysed reaction is Endonucleolytic cleavage to 5'-phosphomonoester.. Functionally, endonuclease that specifically degrades the RNA of RNA-DNA hybrids. This is Ribonuclease HII from Synechococcus sp. (strain CC9311).